The sequence spans 1006 residues: Probable protein phosphatase DDB_G0279461 (1006 aa).

A compositionally biased stretch (polar residues) spans 1–12 (MMVPSLSTSISS). 7 disordered regions span residues 1–119 (MMVP…NNKE), 146–188 (SHAS…RSNS), 214–269 (SSED…NGIR), 312–387 (DAES…PPNQ), 459–513 (NINN…NNIQ), 525–563 (DYNIQEGNDINNDNYEIRVSNNDDDNDSSNNNNNNNSKF), and 604–642 (GSIPTDEDQNNNNNKNKNTTTTTTTTNTTTTTTTTTSAS). The span at 59-69 (NEEEGTADNEL) shows a compositional bias: acidic residues. Residues 65-122 (ADNELESLMSLVNDNNNNNNNTSGIDDDNNNDIDDNNNNNNNNNNNNNNNNNNKEGLN) are a coiled coil. The segment covering 77 to 88 (NDNNNNNNNTSG) has biased composition (low complexity). Positions 89 to 99 (IDDDNNNDIDD) are enriched in acidic residues. Over residues 100-117 (NNNNNNNNNNNNNNNNNN) the composition is skewed to low complexity. Positions 146 to 158 (SHASVSNQSSNGS) are enriched in polar residues. Composition is skewed to low complexity over residues 220–234 (SCHNSNNNNKNNKNN), 244–254 (NINNNNNNNCN), and 316–387 (NYNN…PPNQ). The stretch at 450-516 (KIDNLNKNIN…NNNNNIQDIQ (67 aa)) forms a coiled coil. Positions 466 to 481 (TDSQQPLPSIDVNFSH) are enriched in polar residues. Residues 482–511 (NNNNNNNDNDNNNNNNNNNNNNNNNNNNNN) show a composition bias toward low complexity. The segment covering 525–538 (DYNIQEGNDINNDN) has biased composition (polar residues). Low complexity-rich tracts occupy residues 552-561 (SSNNNNNNNS) and 613-639 (NNNNNKNKNTTTTTTTTNTTTTTTTTT). The PPM-type phosphatase domain occupies 744-1005 (DINKRGLKRA…DNISIIVVTL (262 aa)). Asp784, Gly785, Asp956, and Asp996 together coordinate Mn(2+).

The protein in the C-terminal section; belongs to the PP2C family. It depends on Mg(2+) as a cofactor. Requires Mn(2+) as cofactor.

It carries out the reaction O-phospho-L-seryl-[protein] + H2O = L-seryl-[protein] + phosphate. The enzyme catalyses O-phospho-L-threonyl-[protein] + H2O = L-threonyl-[protein] + phosphate. In Dictyostelium discoideum (Social amoeba), this protein is Probable protein phosphatase DDB_G0279461.